The primary structure comprises 116 residues: Large ribosomal subunit protein uL22 (116 aa).

Belongs to the universal ribosomal protein uL22 family. As to quaternary structure, part of the 50S ribosomal subunit.

This protein binds specifically to 23S rRNA; its binding is stimulated by other ribosomal proteins, e.g. L4, L17, and L20. It is important during the early stages of 50S assembly. It makes multiple contacts with different domains of the 23S rRNA in the assembled 50S subunit and ribosome. Its function is as follows. The globular domain of the protein is located near the polypeptide exit tunnel on the outside of the subunit, while an extended beta-hairpin is found that lines the wall of the exit tunnel in the center of the 70S ribosome. The sequence is that of Large ribosomal subunit protein uL22 from Gloeobacter violaceus (strain ATCC 29082 / PCC 7421).